Consider the following 2813-residue polypeptide: A-kinase anchor protein 13 (2813 aa).

2 disordered regions span residues alanine 304–cysteine 400 and leucine 415–leucine 439. Over residues threonine 427–leucine 439 the composition is skewed to polar residues. The important for interaction with PRKAR2A stretch occupies residues tryptophan 494–alanine 516. Disordered regions lie at residues alanine 539–asparagine 585, histidine 632–cysteine 653, and serine 690–glutamine 726. Over residues serine 561–serine 577 the composition is skewed to basic and acidic residues. Over residues serine 690–aspartate 702 the composition is skewed to polar residues. At serine 790 the chain carries Phosphoserine. 2 disordered regions span residues valine 805–leucine 856 and glutamate 939–glutamate 965. Residue threonine 815 is modified to Phosphothreonine. Residues proline 835 to alanine 844 show a composition bias toward basic and acidic residues. 2 stretches are compositionally biased toward polar residues: residues leucine 847 to leucine 856 and glutamate 939 to glutamine 948. Threonine 953 bears the Phosphothreonine mark. Residue serine 983 is modified to Phosphoserine. 2 disordered regions span residues glycine 1431 to isoleucine 1455 and aspartate 1467 to threonine 1542. A compositionally biased stretch (low complexity) spans aspartate 1467–threonine 1478. The segment covering glycine 1488–leucine 1497 has biased composition (polar residues). Phosphoserine occurs at positions 1489, 1507, 1540, 1565, and 1602. Residues serine 1525–serine 1540 are compositionally biased toward acidic residues. An important for interaction with MAP2K3 region spans residues arginine 1585–asparagine 1715. Residues phenylalanine 1601 to glutamate 1638 form a disordered region. The segment covering lysine 1615–asparagine 1626 has biased composition (polar residues). A compositionally biased stretch (basic and acidic residues) spans glutamate 1628 to glutamate 1638. Phosphoserine is present on residues serine 1642, serine 1645, and serine 1647. Lysine 1670 is subject to N6-methyllysine. The disordered stretch occupies residues lysine 1755–threonine 1793. The stretch at serine 1758–asparagine 1790 forms a coiled coil. The span at lysine 1761–threonine 1788 shows a compositional bias: basic and acidic residues. A Phorbol-ester/DAG-type zinc finger spans residues glycine 1791–cysteine 1838. Serine 1876, serine 1895, and serine 1929 each carry phosphoserine. The tract at residues methionine 1919–cysteine 2813 is interaction with ESR1. At threonine 1930 the chain carries Phosphothreonine. Phosphoserine is present on residues serine 1932 and serine 1945. A DH domain is found at lysine 1994 to lysine 2191. The PH domain occupies lysine 2231 to asparagine 2333. Phosphoserine is present on residues serine 2345 and serine 2398. Residues serine 2345–methionine 2381 are a coiled coil. Residues glutamate 2466–leucine 2502 form a disordered region. A Phosphothreonine modification is found at threonine 2467. The residue at position 2473 (serine 2473) is a Phosphoserine. Over residues glutamine 2491–leucine 2502 the composition is skewed to basic and acidic residues. Residues serine 2563 and serine 2566 each carry the phosphoserine modification. A coiled-coil region spans residues leucine 2568–aspartate 2683. Basic and acidic residues predominate over residues glutamine 2665–leucine 2684. Residues glutamine 2665–cysteine 2813 are disordered. Residues serine 2703, serine 2709, and serine 2728 each carry the phosphoserine modification. Residues serine 2720–serine 2735 show a composition bias toward polar residues. A compositionally biased stretch (low complexity) spans glutamine 2760–threonine 2771.

In terms of assembly, interacts with the cAMP-dependent protein kinase (PKA) holoenzyme and with the regulatory subunit PRKAR2A. Interacts with RHOA. Also interacts with RHOB and RHOC. Identified in a ternary complex with RHOA and PRKAR2A. Identified in a complex with NR3C1 and RHOA. Interacts with BRAF and KSR1. Identified in a complex with BRAF and KSR1. Component of a signaling complex containing at least AKAP13, PKN1, MAPK14, ZAK and MAP2K3. Within this complex, AKAP13 interacts directly with PKN1, which in turn recruits MAPK14, MAP2K3 and ZAK. Interacts (phosphorylated form) with YWHAB and YWHAZ. Interaction with YWHAB inhibits activation of RHOA, interferes with PKN1 binding and activation of MAP kinases. Interacts with GNA12. Interacts with IKBKB. Interacts with ESR1, THRA, PPARA and NME2. Interacts (via the C-terminal domain after the PH domain) with MEF2C and RXRB. Interacts (via the C-terminal domain after the PH domain) with PRKD1. As to expression, detected in mammary gland. Detected in heart (at protein level). Expressed as a 5.3 kb transcript in hematopoietic cells, skeletal muscle, lung, heart, estrogen-responsive reproductive tissues, including breast ductal epithelium. Also found in testis and breast cancer cell lines. Predominantly expressed as a 10 kb transcript in the heart and at lower levels in the lung, placenta, kidney, pancreas, skeletal muscle and liver. Transcripts of between 6-9 kb are also expressed in myeloid and lymphoid lineages, a variety of epithelial tissues, and in skeletal muscle.

It is found in the cytoplasm. The protein resides in the cytosol. The protein localises to the cell cortex. Its subcellular location is the nucleus. It localises to the membrane. Functionally, scaffold protein that plays an important role in assembling signaling complexes downstream of several types of G protein-coupled receptors. Activates RHOA in response to signaling via G protein-coupled receptors via its function as Rho guanine nucleotide exchange factor. May also activate other Rho family members. Part of a kinase signaling complex that links ADRA1A and ADRA1B adrenergic receptor signaling to the activation of downstream p38 MAP kinases, such as MAPK11 and MAPK14. Part of a signaling complex that links ADRA1B signaling to the activation of RHOA and IKBKB/IKKB, leading to increased NF-kappa-B transcriptional activity. Part of a RHOA-dependent signaling cascade that mediates responses to lysophosphatidic acid (LPA), a signaling molecule that activates G-protein coupled receptors and potentiates transcriptional activation of the glucocorticoid receptor NR3C1. Part of a signaling cascade that stimulates MEF2C-dependent gene expression in response to lysophosphatidic acid (LPA). Part of a signaling pathway that activates MAPK11 and/or MAPK14 and leads to increased transcription activation of the estrogen receptors ESR1 and ESR2. Part of a signaling cascade that links cAMP and EGFR signaling to BRAF signaling and to PKA-mediated phosphorylation of KSR1, leading to the activation of downstream MAP kinases, such as MAPK1 or MAPK3. Functions as a scaffold protein that anchors cAMP-dependent protein kinase (PKA) and PRKD1. This promotes activation of PRKD1, leading to increased phosphorylation of HDAC5 and ultimately cardiomyocyte hypertrophy. Has no guanine nucleotide exchange activity on CDC42, Ras or Rac. Required for normal embryonic heart development, and in particular for normal sarcomere formation in the developing cardiomyocytes. Plays a role in cardiomyocyte growth and cardiac hypertrophy in response to activation of the beta-adrenergic receptor by phenylephrine or isoproterenol. Required for normal adaptive cardiac hypertrophy in response to pressure overload. Plays a role in osteogenesis. The protein is A-kinase anchor protein 13 (AKAP13) of Homo sapiens (Human).